Consider the following 353-residue polypeptide: UPF0283 membrane protein KPK_3110 (353 aa).

A run of 3 helical transmembrane segments spans residues Met-70–Thr-90, Trp-99–Val-119, and Glu-213–Trp-233.

Belongs to the UPF0283 family.

Its subcellular location is the cell inner membrane. This is UPF0283 membrane protein KPK_3110 from Klebsiella pneumoniae (strain 342).